Here is a 300-residue protein sequence, read N- to C-terminus: Ribokinase (300 aa).

Residues 11–13 (SMD), 39–43 (GKGAN), and glutamate 139 contribute to the substrate site. Residues asparagine 183 and 210–215 (TLGSEG) contribute to the ATP site. Positions 236 and 238 each coordinate K(+). 241 to 242 (GD) is an ATP binding site. Substrate is bound at residue aspartate 242. The active-site Proton acceptor is aspartate 242. Residues serine 272, lysine 275, and glycine 277 each coordinate K(+).

The protein belongs to the carbohydrate kinase PfkB family. Ribokinase subfamily. In terms of assembly, homodimer. The cofactor is Mg(2+).

Its subcellular location is the cytoplasm. It catalyses the reaction D-ribose + ATP = D-ribose 5-phosphate + ADP + H(+). Its pathway is carbohydrate metabolism; D-ribose degradation; D-ribose 5-phosphate from beta-D-ribopyranose: step 2/2. Its activity is regulated as follows. Activated by a monovalent cation that binds near, but not in, the active site. The most likely occupant of the site in vivo is potassium. Ion binding induces a conformational change that may alter substrate affinity. Its function is as follows. Catalyzes the phosphorylation of ribose at O-5 in a reaction requiring ATP and magnesium. The resulting D-ribose-5-phosphate can then be used either for sythesis of nucleotides, histidine, and tryptophan, or as a component of the pentose phosphate pathway. In Lactococcus lactis subsp. lactis (strain IL1403) (Streptococcus lactis), this protein is Ribokinase.